The primary structure comprises 345 residues: Calcium/calmodulin-dependent protein kinase type 1 (345 aa).

Residues 1–23 form a disordered region; that stretch reads MPLFGSKKETAKKSSKKDKDEGK. One can recognise a Protein kinase domain in the interval 31-287; it reads YILKDLLGTG…CKQALGHPWI (257 aa). ATP is bound by residues 37–45 and Lys61; that span reads LGTGAFSQV. The active-site Proton acceptor is the Asp153. Residues 287–327 form an autoinhibitory domain region; it reads ISGNAASTENIHSSVSEQLKKNFAKSRWRQAYHATAVIRQM. Residues 307–328 are calmodulin-binding; that stretch reads KNFAKSRWRQAYHATAVIRQMR.

It belongs to the protein kinase superfamily. CAMK Ser/Thr protein kinase family. CaMK subfamily. Highly expressed in hepatopancreas and to a lesser extent in gills. Low expression in hemocytes, testis, ovary, heart, eyestalk, muscle and epidermis.

The catalysed reaction is L-seryl-[protein] + ATP = O-phospho-L-seryl-[protein] + ADP + H(+). The enzyme catalyses L-threonyl-[protein] + ATP = O-phospho-L-threonyl-[protein] + ADP + H(+). With respect to regulation, activated by Ca(2+)/calmodulin. Binding of calmodulin results in conformational change that relieves intrasteric autoinhibition. In terms of biological role, calcium/calmodulin-dependent protein kinase that operates in the calcium-triggered CaMKK-CaMK1 signaling cascade and, upon calcium influx, regulates transcription activators activity, cell cycle, hormone production, cell differentiation, actin filament organization and neurite outgrowth. Involved in molting. The protein is Calcium/calmodulin-dependent protein kinase type 1 of Macrobrachium nipponense (Oriental river shrimp).